Reading from the N-terminus, the 608-residue chain is NADH-quinone oxidoreductase subunit C/D (608 aa).

The NADH dehydrogenase I subunit C stretch occupies residues 1–199 (MSAASSLAPQ…EPFHLSTEKE (199 aa)). An NADH dehydrogenase I subunit D region spans residues 223–608 (DFMFLNLGPN…IDFVMADVDR (386 aa)).

The protein in the N-terminal section; belongs to the complex I 30 kDa subunit family. In the C-terminal section; belongs to the complex I 49 kDa subunit family. As to quaternary structure, NDH-1 is composed of 13 different subunits. Subunits NuoB, CD, E, F, and G constitute the peripheral sector of the complex.

Its subcellular location is the cell inner membrane. It catalyses the reaction a quinone + NADH + 5 H(+)(in) = a quinol + NAD(+) + 4 H(+)(out). Its function is as follows. NDH-1 shuttles electrons from NADH, via FMN and iron-sulfur (Fe-S) centers, to quinones in the respiratory chain. The immediate electron acceptor for the enzyme in this species is believed to be ubiquinone. Couples the redox reaction to proton translocation (for every two electrons transferred, four hydrogen ions are translocated across the cytoplasmic membrane), and thus conserves the redox energy in a proton gradient. The chain is NADH-quinone oxidoreductase subunit C/D from Nitrosospira multiformis (strain ATCC 25196 / NCIMB 11849 / C 71).